We begin with the raw amino-acid sequence, 495 residues long: Aspartyl/glutamyl-tRNA(Asn/Gln) amidotransferase subunit B (495 aa).

The protein belongs to the GatB/GatE family. GatB subfamily. As to quaternary structure, heterotrimer of A, B and C subunits.

The catalysed reaction is L-glutamyl-tRNA(Gln) + L-glutamine + ATP + H2O = L-glutaminyl-tRNA(Gln) + L-glutamate + ADP + phosphate + H(+). It catalyses the reaction L-aspartyl-tRNA(Asn) + L-glutamine + ATP + H2O = L-asparaginyl-tRNA(Asn) + L-glutamate + ADP + phosphate + 2 H(+). Allows the formation of correctly charged Asn-tRNA(Asn) or Gln-tRNA(Gln) through the transamidation of misacylated Asp-tRNA(Asn) or Glu-tRNA(Gln) in organisms which lack either or both of asparaginyl-tRNA or glutaminyl-tRNA synthetases. The reaction takes place in the presence of glutamine and ATP through an activated phospho-Asp-tRNA(Asn) or phospho-Glu-tRNA(Gln). This is Aspartyl/glutamyl-tRNA(Asn/Gln) amidotransferase subunit B from Prochlorococcus marinus (strain MIT 9313).